The sequence spans 87 residues: Toxin Css39.8 (87 aa).

Positions 1 to 19 (MNSLLMITACFFLIGTVWA) are cleaved as a signal peptide. One can recognise an LCN-type CS-alpha/beta domain in the interval 20–85 (KEGYLVNKST…TYPLPNKSCS (66 aa)). 4 disulfides stabilise this stretch: Cys-31/Cys-84, Cys-35/Cys-60, Cys-44/Cys-65, and Cys-48/Cys-67.

It belongs to the long (4 C-C) scorpion toxin superfamily. Sodium channel inhibitor family. Beta subfamily. Expressed by the venom gland.

The protein localises to the secreted. Functionally, beta toxins bind voltage-independently at site-4 of sodium channels (Nav) and shift the voltage of activation toward more negative potentials thereby affecting sodium channel activation and promoting spontaneous and repetitive firing. This toxin is lethal to crustaceans (freshwater crayfish (Cambarellus montezumae spp.)), it provokes a reversible paralysis to insects (crickets (Achaeta spp.)), but is not toxic to mice. At high concentrations, it does displace the (beta) mammal-specific toxin Cn2 from rat brain synaptosomes. This is Toxin Css39.8 from Centruroides suffusus (Durango bark scorpion).